The following is a 329-amino-acid chain: Beta-ketoacyl-[acyl-carrier-protein] synthase III (329 aa).

Residues Cys-123 and His-256 contribute to the active site. The segment at 257 to 261 is ACP-binding; the sequence is QANIR. Residue Asn-286 is part of the active site.

It belongs to the thiolase-like superfamily. FabH family. Homodimer.

It is found in the cytoplasm. The catalysed reaction is malonyl-[ACP] + acetyl-CoA + H(+) = 3-oxobutanoyl-[ACP] + CO2 + CoA. It functions in the pathway lipid metabolism; fatty acid biosynthesis. In terms of biological role, catalyzes the condensation reaction of fatty acid synthesis by the addition to an acyl acceptor of two carbons from malonyl-ACP. Catalyzes the first condensation reaction which initiates fatty acid synthesis and may therefore play a role in governing the total rate of fatty acid production. Possesses both acetoacetyl-ACP synthase and acetyl transacylase activities. Its substrate specificity determines the biosynthesis of branched-chain and/or straight-chain of fatty acids. The chain is Beta-ketoacyl-[acyl-carrier-protein] synthase III from Burkholderia orbicola (strain AU 1054).